The primary structure comprises 247 residues: 3-deoxy-manno-octulosonate cytidylyltransferase (247 aa).

Belongs to the KdsB family.

It is found in the cytoplasm. It carries out the reaction 3-deoxy-alpha-D-manno-oct-2-ulosonate + CTP = CMP-3-deoxy-beta-D-manno-octulosonate + diphosphate. It functions in the pathway nucleotide-sugar biosynthesis; CMP-3-deoxy-D-manno-octulosonate biosynthesis; CMP-3-deoxy-D-manno-octulosonate from 3-deoxy-D-manno-octulosonate and CTP: step 1/1. Its pathway is bacterial outer membrane biogenesis; lipopolysaccharide biosynthesis. Activates KDO (a required 8-carbon sugar) for incorporation into bacterial lipopolysaccharide in Gram-negative bacteria. This is 3-deoxy-manno-octulosonate cytidylyltransferase from Methylorubrum extorquens (strain CM4 / NCIMB 13688) (Methylobacterium extorquens).